The primary structure comprises 280 residues: Chemotaxis protein methyltransferase 2 (280 aa).

The CheR-type methyltransferase domain occupies Phe10–Ala280. S-adenosyl-L-methionine contacts are provided by residues Asn85, Thr87, Arg91, Glu125, Asp150, Asn208 to Leu209, and Arg226 to Asn227.

In terms of assembly, interacts with the C-terminal pentapeptide GWEEF of the methyl-accepting chemotaxis protein McpB.

The catalysed reaction is L-glutamyl-[protein] + S-adenosyl-L-methionine = [protein]-L-glutamate 5-O-methyl ester + S-adenosyl-L-homocysteine. Functionally, methylation of the methyl-accepting chemotaxis proteins (MCP) to form gamma-glutamyl methyl ester residues in MCP. It specifically targets the McpB chemoreceptor. In Pseudomonas aeruginosa (strain ATCC 15692 / DSM 22644 / CIP 104116 / JCM 14847 / LMG 12228 / 1C / PRS 101 / PAO1), this protein is Chemotaxis protein methyltransferase 2.